The following is a 1438-amino-acid chain: Gag-Pol polyprotein (1438 aa).

Gly2 carries the N-myristoyl glycine; by host lipid modification. A Nuclear export signal motif is present at residues 16-22; sequence WEKIYLR. A Nuclear localization signal motif is present at residues 26 to 32; the sequence is KKKYMMK. CCHC-type zinc fingers lie at residues 385 to 402 and 406 to 423; these read VKCF…NCKA and KGCW…NCTN. Positions 439-481 are disordered; that stretch reads GKAREFPSEETRTNSSTNRELRVQGGGTCPEGGSEERGDREQA. Residues 440–450 are compositionally biased toward basic and acidic residues; it reads KAREFPSEETR. The Peptidase A2 domain maps to 507-576; it reads KEALLDTGAD…TPVNIIGRNI (70 aa). Asp512 acts as the For protease activity; shared with dimeric partner in catalysis. The Reverse transcriptase domain maps to 630–820; that stretch reads EGKISRVGPE…PPFLWMGYEL (191 aa). Mg(2+)-binding residues include Asp696, Asp771, and Asp772. The interval 813–821 is RT 'primer grip'; the sequence is FLWMGYELH. A Tryptophan repeat motif motif is present at residues 984-1000; that stretch reads WEAWWTDYWQATWIPEW. An RNase H type-1 domain is found at 1020 to 1143; it reads IPGAETFYVD…IDKLVSSGIR (124 aa). The Mg(2+) site is built by Asp1029, Glu1064, Asp1084, and Asp1135. An Integrase-type zinc finger spans residues 1149-1190; the sequence is DGIDKAQEEHEKYHNNWRAMASDFNLPPIVAKEIVANCDKCQ. Positions 1158, 1162, 1186, and 1189 each coordinate Zn(2+). Residues 1200–1350 enclose the Integrase catalytic domain; it reads VDCSPGIWQL…SAGERIIDIL (151 aa). Mg(2+) is bound by residues Asp1210 and Asp1262. The integrase-type DNA-binding region spans 1369–1416; that stretch reads FRVYYRDSRDPIWKGPAKLLWKGEGAVVLQDQEEIKVVPRRKAKIIRD.

As to quaternary structure, homotrimer. Interacts with gp41 (via C-terminus). In terms of assembly, homodimer. The active site consists of two apposed aspartic acid residues. Heterodimer of p66 RT and p51 RT (RT p66/p51). Heterodimerization of RT is essential for DNA polymerase activity. Despite the sequence identities, p66 RT and p51 RT have distinct folding. As to quaternary structure, homotetramer; may further associate as a homohexadecamer. Mg(2+) serves as cofactor. Post-translationally, specific enzymatic cleavages by the viral protease yield mature proteins. The protease is released by autocatalytic cleavage. The polyprotein is cleaved during and after budding, this process is termed maturation. Proteolytic cleavage of p66 RT removes the RNase H domain to yield the p51 RT subunit. Capsid protein p24 is phosphorylated.

It localises to the virion. Its subcellular location is the host nucleus. The protein localises to the host cytoplasm. It is found in the host cell membrane. The catalysed reaction is Specific for a P1 residue that is hydrophobic, and P1' variable, but often Pro.. It carries out the reaction Endohydrolysis of RNA in RNA/DNA hybrids. Three different cleavage modes: 1. sequence-specific internal cleavage of RNA. Human immunodeficiency virus type 1 and Moloney murine leukemia virus enzymes prefer to cleave the RNA strand one nucleotide away from the RNA-DNA junction. 2. RNA 5'-end directed cleavage 13-19 nucleotides from the RNA end. 3. DNA 3'-end directed cleavage 15-20 nucleotides away from the primer terminus.. It catalyses the reaction 3'-end directed exonucleolytic cleavage of viral RNA-DNA hybrid.. The enzyme catalyses DNA(n) + a 2'-deoxyribonucleoside 5'-triphosphate = DNA(n+1) + diphosphate. Its activity is regulated as follows. The viral protease is inhibited by many synthetic protease inhibitors (PIs), such as amprenavir, atazanavir, indinavir, loprinavir, nelfinavir, ritonavir and saquinavir. RT can be inhibited either by nucleoside RT inhibitors (NRTIs) or by non nucleoside RT inhibitors (NNRTIs). NRTIs act as chain terminators, whereas NNRTIs inhibit DNA polymerization by binding a small hydrophobic pocket near the RT active site and inducing an allosteric change in this region. Classical NRTIs are abacavir, adefovir (PMEA), didanosine (ddI), lamivudine (3TC), stavudine (d4T), tenofovir (PMPA), zalcitabine (ddC), and zidovudine (AZT). Classical NNRTIs are atevirdine (BHAP U-87201E), delavirdine, efavirenz (DMP-266), emivirine (I-EBU), and nevirapine (BI-RG-587). The tritherapies used as a basic effective treatment of AIDS associate two NRTIs and one NNRTI. Use of protease inhibitors in tritherapy regimens permit more ambitious therapeutic strategies. In terms of biological role, gag-Pol polyprotein and Gag polyprotein may regulate their own translation, by the binding genomic RNA in the 5'-UTR. At low concentration, Gag-Pol and Gag would promote translation, whereas at high concentration, the polyproteins encapsidate genomic RNA and then shut off translation. Matrix protein p17 has two main functions: in infected cell, it targets Gag and Gag-pol polyproteins to the plasma membrane via a multipartite membrane-binding signal, that includes its myristointegration complex. The myristoylation signal and the NLS exert conflicting influences its subcellular localization. The key regulation of these motifs might be phosphorylation of a portion of MA molecules on the C-terminal tyrosine at the time of virus maturation, by virion-associated cellular tyrosine kinase. Implicated in the release from host cell mediated by Vpu. Its function is as follows. Capsid protein p24 forms the conical core that encapsulates the genomic RNA-nucleocapsid complex in the virion. The core is constituted by capsid protein hexamer subunits. The core is disassembled soon after virion entry. Interaction with host PPIA/CYPA protects the virus from restriction by host TRIM5-alpha and from an unknown antiviral activity in host cells. This capsid restriction by TRIM5 is one of the factors which restricts SIV to the simian species. Functionally, nucleocapsid protein p7 encapsulates and protects viral dimeric unspliced (genomic) RNA. Binds these RNAs through its zinc fingers. Facilitates rearangement of nucleic acid secondary structure during retrotranscription of genomic RNA. This capability is referred to as nucleic acid chaperone activity. In terms of biological role, the aspartyl protease mediates proteolytic cleavages of Gag and Gag-Pol polyproteins during or shortly after the release of the virion from the plasma membrane. Cleavages take place as an ordered, step-wise cascade to yield mature proteins. This process is called maturation. Displays maximal activity during the budding process just prior to particle release from the cell. Also cleaves Nef and Vif, probably concomitantly with viral structural proteins on maturation of virus particles. Hydrolyzes host EIF4GI and PABP1 in order to shut off the capped cellular mRNA translation. The resulting inhibition of cellular protein synthesis serves to ensure maximal viral gene expression and to evade host immune response. Reverse transcriptase/ribonuclease H (RT) is a multifunctional enzyme that converts the viral dimeric RNA genome into dsDNA in the cytoplasm, shortly after virus entry into the cell. This enzyme displays a DNA polymerase activity that can copy either DNA or RNA templates, and a ribonuclease H (RNase H) activity that cleaves the RNA strand of RNA-DNA heteroduplexes in a partially processive 3' to 5' endonucleasic mode. Conversion of viral genomic RNA into dsDNA requires many steps. A tRNA binds to the primer-binding site (PBS) situated at the 5'-end of the viral RNA. RT uses the 3' end of the tRNA primer to perform a short round of RNA-dependent minus-strand DNA synthesis. The reading proceeds through the U5 region and ends after the repeated (R) region which is present at both ends of viral RNA. The portion of the RNA-DNA heteroduplex is digested by the RNase H, resulting in a ssDNA product attached to the tRNA primer. This ssDNA/tRNA hybridizes with the identical R region situated at the 3' end of viral RNA. This template exchange, known as minus-strand DNA strong stop transfer, can be either intra- or intermolecular. RT uses the 3' end of this newly synthesized short ssDNA to perform the RNA-dependent minus-strand DNA synthesis of the whole template. RNase H digests the RNA template except for two polypurine tracts (PPTs) situated at the 5'-end and near the center of the genome. It is not clear if both polymerase and RNase H activities are simultaneous. RNase H can probably proceed both in a polymerase-dependent (RNA cut into small fragments by the same RT performing DNA synthesis) and a polymerase-independent mode (cleavage of remaining RNA fragments by free RTs). Secondly, RT performs DNA-directed plus-strand DNA synthesis using the PPTs that have not been removed by RNase H as primers. PPTs and tRNA primers are then removed by RNase H. The 3' and 5' ssDNA PBS regions hybridize to form a circular dsDNA intermediate. Strand displacement synthesis by RT to the PBS and PPT ends produces a blunt ended, linear dsDNA copy of the viral genome that includes long terminal repeats (LTRs) at both ends. Its function is as follows. Integrase catalyzes viral DNA integration into the host chromosome, by performing a series of DNA cutting and joining reactions. This enzyme activity takes place after virion entry into a cell and reverse transcription of the RNA genome in dsDNA. The first step in the integration process is 3' processing. This step requires a complex comprising the viral genome, matrix protein, Vpr and integrase. This complex is called the pre-integration complex (PIC). The integrase protein removes 2 nucleotides from each 3' end of the viral DNA, leaving recessed CA OH's at the 3' ends. In the second step, the PIC enters cell nucleus. This process is mediated through integrase and Vpr proteins, and allows the virus to infect a non dividing cell. This ability to enter the nucleus is specific of lentiviruses, other retroviruses cannot and rely on cell division to access cell chromosomes. In the third step, termed strand transfer, the integrase protein joins the previously processed 3' ends to the 5' ends of strands of target cellular DNA at the site of integration. The 5'-ends are produced by integrase-catalyzed staggered cuts, 5 bp apart. A Y-shaped, gapped, recombination intermediate results, with the 5'-ends of the viral DNA strands and the 3' ends of target DNA strands remaining unjoined, flanking a gap of 5 bp. The last step is viral DNA integration into host chromosome. This involves host DNA repair synthesis in which the 5 bp gaps between the unjoined strands are filled in and then ligated. Since this process occurs at both cuts flanking the SIV genome, a 5 bp duplication of host DNA is produced at the ends of SIV integration. Alternatively, Integrase may catalyze the excision of viral DNA just after strand transfer, this is termed disintegration. The chain is Gag-Pol polyprotein (gag-pol) from Pan troglodytes (Chimpanzee).